The chain runs to 304 residues: N-carbamoyl-D-amino acid hydrolase (304 aa).

A CN hydrolase domain is found at 5–276 (MILAVGQQGP…DEVITAAVDL (272 aa)). Residues Glu47, Lys127, and Cys172 contribute to the active site.

It carries out the reaction an N-carbamoyl-D-amino acid + H2O + 2 H(+) = a D-alpha-amino acid + NH4(+) + CO2. The enzyme catalyzes the hydrolysis of N-carbamoyl-D-amino acids to the corresponding which are useful intermediates in the preparation of beta-lactam antibiotics. Industrial production of beta-lactam antibiotics is now being developed using this enzyme. This is N-carbamoyl-D-amino acid hydrolase from Agrobacterium sp. (strain KNK712).